The sequence spans 288 residues: Protein FANTASTIC FOUR 3 (288 aa).

Positions 48–60 (HAEDTRNRNDDKA) are enriched in basic and acidic residues. 3 disordered regions span residues 48 to 100 (HAED…YYVQ), 146 to 172 (ETTT…PLTT), and 222 to 261 (NEFV…IENV). Over residues 66-90 (SDSSGWSSLQSLSSGSSSSTKTTTS) the composition is skewed to low complexity. An FAF domain is found at 165 to 217 (DLPPPLTTMRGFQCIQMRPHRENGRLVMTATNAPPRNGCFQADRSNGRLRLSI). Over residues 223-256 (EFVENEEETIEPEETEEYEEEEEEEEDEDEDEVM) the composition is skewed to acidic residues.

It belongs to the fantastic four family. In terms of tissue distribution, expressed in the shoot apex, stamens, young leaves and young siliques, but not in old leaves. Detected in provascular and vascular tissue, but not in the vegetative meristem. In inflorescences, restricted to the vasculature and absent from young flowers, except from anthers.

In terms of biological role, able to repress WUS when constitutively overexpressed, but have no effect on CLV3. This is Protein FANTASTIC FOUR 3 (FAF3) from Arabidopsis thaliana (Mouse-ear cress).